An 884-amino-acid chain; its full sequence is MGDAEDFCPHLDSIGEVTKEDLILKSKGTCESCGVGGPNLWACLQDGCQSVGCGESYVDHSTLHAQAKKHNLTVNLTTFRVWCYACEKEVFLDPRGPPASQTTSPRLSHRDFPTSAHPLKSVPIAVGDDGESESDEDDIKPRGLTGMKNIGNSCYMNAALQALSNCPPLTQFFLECGGLVRTDKKPALCKSYQKLISELWHKKRPSYVVPSSLYHGIKLINPLFRGYSQQDTQEFLRCLMDQLHEELKEPVPLETQEREEEDRDDQREGERGGTVEEDFLSCDSGGEMGDGEGGGGVGTLSEMELLIREEVGRGLSEKEKLKERKLSYCHRRTSSEQADEDADVDTAMIPEPDNDAYVHCSSRSCSPHPVESISKHSSTPPRSSPLRTSHSYVLKKAQVLSGGKKRSEVRYRSVISDIFDGSILSLVQCLTCDRVSTTIETFQDLSLPIPGKEDLAKLHSTIHQSAVSKAGTCGDSYAAQGWLSFFMDYIRRFVVSCIPSWFWGPMITLEDCLAAFFAADELKGDNMYSCERCKKLRNGVKYCKVLRLPEILCIHLKRFRHEVMYSFKIGSHVSFPLEGLNLRPFLAKECVSRITTYDLLAVICHHGSASSGHYISYCQNVINGQWYEFDDQYVTEVHETVVQNAEAYVLFYRKSSEEAERERQKVVSLAAMKESGLLQFYISREWLNKFNTFAEPGPISNQSFLCSHGGIPPNKYHYIDDLVVILPQSVWEYLYNRFGGGPAVNHLYVCSICQVEIEALAKRRKTEIDTFIKLNKAFQAEEAPSVIYCISMQWFREWEAFVKAKDSDPPGPIDNSKVALTKSSGQVQLKQGADYGQISEETWNYLLNVYGGGPEIAIRQTVAQYQEAEHLHGEQKIEAETRAG.

The UBP-type zinc-finger motif lies at 6–109 (DFCPHLDSIG…SQTTSPRLSH (104 aa)). Zn(2+) contacts are provided by Cys8, His10, Cys30, Cys33, Cys43, Cys48, Cys53, His60, His64, His70, Cys83, and Cys86. Positions 95-142 (RGPPASQTTSPRLSHRDFPTSAHPLKSVPIAVGDDGESESDEDDIKPR) are disordered. Positions 128 to 138 (DDGESESDEDD) are enriched in acidic residues. Positions 145–655 (TGMKNIGNSC…EAYVLFYRKS (511 aa)) constitute a USP domain. Cys154 acts as the Nucleophile in catalysis. Disordered regions lie at residues 247 to 296 (LKEP…GGGG) and 368 to 388 (HPVE…PLRT). Residues 264-274 (DDQREGERGGT) are compositionally biased toward basic and acidic residues. The segment covering 286–296 (GEMGDGEGGGG) has biased composition (gly residues). Over residues 376-388 (HSSTPPRSSPLRT) the composition is skewed to low complexity. The active-site Proton acceptor is the His613. DUSP domains lie at 657–750 (EEAE…LYVC) and 759–862 (ALAK…RQTV).

This sequence belongs to the peptidase C19 family. USP20/USP33 subfamily.

It localises to the cytoplasm. The protein resides in the perinuclear region. The protein localises to the cytoskeleton. It is found in the microtubule organizing center. Its subcellular location is the centrosome. It catalyses the reaction Thiol-dependent hydrolysis of ester, thioester, amide, peptide and isopeptide bonds formed by the C-terminal Gly of ubiquitin (a 76-residue protein attached to proteins as an intracellular targeting signal).. Its function is as follows. Deubiquitinating enzyme involved in beta-2 adrenergic receptor (adrb2) recycling. Acts as a regulator of G-protein coupled receptor (GPCR) signaling by mediating the deubiquitination beta-2 adrenergic receptor (adrb2). Plays a central role in adrb2 recycling and resensitization after prolonged agonist stimulation by constitutively binding adrb2, mediating deubiquitination of adrb2 and inhibiting lysosomal trafficking of adrb2. Mediates deubiquitination of both 'Lys-48'- and 'Lys-63'-linked polyubiquitin chains. This chain is Ubiquitin carboxyl-terminal hydrolase 20 (usp20), found in Xenopus tropicalis (Western clawed frog).